A 571-amino-acid chain; its full sequence is Putative diflavin flavoprotein A 1 (571 aa).

The segment at 43–236 is zinc metallo-hydrolase; the sequence is ENGTTYNSFL…PPVQLVATGH (194 aa). 6 residues coordinate Fe cation: His92, Glu94, Asp96, His159, Asp178, and His236. The Flavodoxin-like domain occupies 265–426; the sequence is VAIFYAANYG…DLDKALGRLS (162 aa). Residues 427-571 form a flavodoxin-reductase-like region; that stretch reads GGLYIITAQK…VHHRKVGNHY (145 aa).

This sequence in the N-terminal section; belongs to the zinc metallo-hydrolase group 3 family. The protein in the C-terminal section; belongs to the flavodoxin reductase family. Fe cation serves as cofactor.

Mediates electron transfer from NADH to oxygen, reducing it to water. This modular protein has 3 redox cofactors, in other organisms the same activity requires 2 or 3 proteins. The sequence is that of Putative diflavin flavoprotein A 1 (dfa1) from Thermosynechococcus vestitus (strain NIES-2133 / IAM M-273 / BP-1).